A 513-amino-acid chain; its full sequence is ATP synthase subunit alpha (513 aa).

Residue 169 to 176 (GDRQTGKT) participates in ATP binding.

This sequence belongs to the ATPase alpha/beta chains family. In terms of assembly, F-type ATPases have 2 components, CF(1) - the catalytic core - and CF(0) - the membrane proton channel. CF(1) has five subunits: alpha(3), beta(3), gamma(1), delta(1), epsilon(1). CF(0) has three main subunits: a(1), b(2) and c(9-12). The alpha and beta chains form an alternating ring which encloses part of the gamma chain. CF(1) is attached to CF(0) by a central stalk formed by the gamma and epsilon chains, while a peripheral stalk is formed by the delta and b chains.

The protein resides in the cell inner membrane. The enzyme catalyses ATP + H2O + 4 H(+)(in) = ADP + phosphate + 5 H(+)(out). Functionally, produces ATP from ADP in the presence of a proton gradient across the membrane. The alpha chain is a regulatory subunit. The sequence is that of ATP synthase subunit alpha from Pectobacterium carotovorum subsp. carotovorum (strain PC1).